The sequence spans 1382 residues: Suppressor of organelle fusion 2 (1382 aa).

The BEACH domain maps to 229–463 (RIPLDEATSN…QLFNRPHPIR (235 aa)). 2 WD repeats span residues 1094–1133 (GHQEKIRKLAAISNENSFVSASSDKTVKLWSIKPELDEIG) and 1140–1176 (KHTRPVHDITILADNSIASTDGVLHVWDPFRTTLLAQ).

This sequence belongs to the WD repeat WDR81 family. Interacts with sorf-1; the interaction is direct. Interacts with bec-1.

The protein localises to the early endosome. Its subcellular location is the late endosome. It localises to the cytoplasm. Its function is as follows. Together with sorf-1 negatively regulates the levels of phosphatidylinositol 3-phosphate (PtdIns3P) to enable the conversion of early endosomes to late endosomes. Binds to sorf-1 and the sorf-1-sorf-2 complex likely acts through bec-1, a non-catalytic subunit of phosphatidylinositol 3-kinase (PI3K), to suppress PI3K activity, thereby negatively regulating endosomal PtdIns3P levels. The chain is Suppressor of organelle fusion 2 from Caenorhabditis elegans.